A 2471-amino-acid polypeptide reads, in one-letter code: Histidine protein kinase 1 (2471 aa).

The span at Met1–Glu10 shows a compositional bias: polar residues. 3 disordered regions span residues Met1–Tyr30, Glu52–Ser75, and Arg395–Gly415. Residues Pro11–Tyr30 are compositionally biased toward basic and acidic residues. In terms of domain architecture, Protein kinase spans Glu358–Ile636. Residues Asn2004–Ala2225 enclose the Histidine kinase domain. Residue His2007 is modified to Phosphohistidine; by autocatalysis. The Response regulatory domain occupies Arg2340 to Gly2466. Asp2394 carries the 4-aspartylphosphate modification.

The phosphorelay mechanism involves the sequential transfer of a phosphate group from His-2007 (H1) in the histidine kinase domain (transmitter domain) to Asp-2394 (D1) of the response regulatory domain (receiver domain). This transfer probably occurs between two CHK1 molecules, rather than intramolecularly.

The enzyme catalyses ATP + protein L-histidine = ADP + protein N-phospho-L-histidine.. In terms of biological role, histidine kinase involved in a two-component signaling pathway that regulates cell wall mannan and glucan biosynthesis. Regulates quorum sensing as well as hyphal formation, biofilm formation, chlamidospore formation, and virulence. Plays a prominent role in phagocyte activation. Involved in the covering of the most potent pro-inflammatory cell wall molecules, the beta-glucans, underneath a dense mannan layer, so that the pathogen becomes partly invisible for immune cells such as phagocytes. The sequence is that of Histidine protein kinase 1 (CHK1) from Candida albicans (strain SC5314 / ATCC MYA-2876) (Yeast).